Here is an 85-residue protein sequence, read N- to C-terminus: Small ribosomal subunit protein uS12m (85 aa).

It belongs to the universal ribosomal protein uS12 family.

Its subcellular location is the mitochondrion matrix. It localises to the kinetoplast. Functionally, protein S12 is involved in the translation initiation step. The polypeptide is Small ribosomal subunit protein uS12m (RPS12) (Leishmania tarentolae (Sauroleishmania tarentolae)).